The following is an 83-amino-acid chain: MPKTVANTKPMDVLKNALSRNVLIDVKGNREYSGILEGYDVYMNVVLQNASEIINGENKGVFDRILVRGDNVIFVSPSKGDNE.

Residues 9–81 (KPMDVLKNAL…VIFVSPSKGD (73 aa)) form the Sm domain.

It belongs to the snRNP Sm proteins family.

This is Putative snRNP Sm-like protein from Thermoplasma volcanium (strain ATCC 51530 / DSM 4299 / JCM 9571 / NBRC 15438 / GSS1).